We begin with the raw amino-acid sequence, 211 residues long: Putative F-box protein At1g52490 (211 aa).

The region spanning Glu-12–Val-59 is the F-box domain.

The polypeptide is Putative F-box protein At1g52490 (Arabidopsis thaliana (Mouse-ear cress)).